We begin with the raw amino-acid sequence, 93 residues long: DNA/RNA-binding protein Alba (93 aa).

At lysine 11 the chain carries N6-acetyllysine.

Belongs to the histone-like Alba family. In terms of processing, acetylated. Acetylation at Lys-11 decreases DNA-binding affinity.

Its subcellular location is the cytoplasm. It is found in the chromosome. Its function is as follows. Binds double-stranded DNA tightly but without sequence specificity. Involved in DNA compaction. The polypeptide is DNA/RNA-binding protein Alba (Pyrococcus abyssi (strain GE5 / Orsay)).